Reading from the N-terminus, the 797-residue chain is Phenylalanine--tRNA ligase beta subunit (797 aa).

In terms of domain architecture, tRNA-binding spans 40 to 154 (MEGLSKLVVG…ADAKVGDSIF (115 aa)). One can recognise a B5 domain in the interval 407–482 (PILPKVSITL…RIYGYDNLPS (76 aa)). Residues Asp460, Asp466, Glu469, and Glu470 each contribute to the Mg(2+) site. The FDX-ACB domain maps to 704–797 (PKVQAVHRDI…LVEKLDIEIR (94 aa)).

The protein belongs to the phenylalanyl-tRNA synthetase beta subunit family. Type 1 subfamily. As to quaternary structure, tetramer of two alpha and two beta subunits. Requires Mg(2+) as cofactor.

The protein localises to the cytoplasm. The catalysed reaction is tRNA(Phe) + L-phenylalanine + ATP = L-phenylalanyl-tRNA(Phe) + AMP + diphosphate + H(+). The sequence is that of Phenylalanine--tRNA ligase beta subunit from Lactococcus lactis subsp. lactis (strain IL1403) (Streptococcus lactis).